We begin with the raw amino-acid sequence, 89 residues long: Large ribosomal subunit protein bL27 (89 aa).

The tract at residues 1 to 21 is disordered; sequence MAHKKAGGSSRNGRDSESKRL.

The protein belongs to the bacterial ribosomal protein bL27 family.

The sequence is that of Large ribosomal subunit protein bL27 from Bartonella quintana (strain Toulouse) (Rochalimaea quintana).